Consider the following 471-residue polypeptide: Paraneoplastic antigen-like protein 8A (471 aa).

Disordered stretches follow at residues 188 to 300 and 321 to 471; these read SAAG…EGSA and ASRG…PSAV. Residues 238-247 are compositionally biased toward basic residues; the sequence is HSRRKRQKKT. A compositionally biased stretch (low complexity) spans 256–269; the sequence is KKSQGSHSHSSASL. Over residues 270 to 287 the composition is skewed to basic and acidic residues; sequence KHPEADDGKNRERLEHVR.

Belongs to the PNMA family.

This chain is Paraneoplastic antigen-like protein 8A (PNMA8A), found in Bos taurus (Bovine).